Reading from the N-terminus, the 112-residue chain is Large ribosomal subunit protein P2 (112 aa).

The segment at 81–112 is disordered; it reads VETAEAKKEDKKEEKKEEEEEEEDDLGFSLFG. The segment covering 84-95 has biased composition (basic and acidic residues); that stretch reads AEAKKEDKKEEK. The span at 96–106 shows a compositional bias: acidic residues; that stretch reads KEEEEEEEDDL.

This sequence belongs to the eukaryotic ribosomal protein P1/P2 family. As to quaternary structure, P1 and P2 exist as dimers at the large ribosomal subunit. Phosphorylated.

In terms of biological role, plays an important role in the elongation step of protein synthesis. In Plasmodium falciparum (isolate 3D7), this protein is Large ribosomal subunit protein P2 (MAL3P3.19).